The chain runs to 109 residues: Thioredoxin (109 aa).

The Thioredoxin domain maps to 2-109; it reads TNCIVELTDG…LKDFLNLYLK (108 aa). C33 and C36 are oxidised to a cystine.

The protein belongs to the thioredoxin family.

Its function is as follows. Participates in various redox reactions through the reversible oxidation of its active center dithiol to a disulfide and catalyzes dithiol-disulfide exchange reactions. The sequence is that of Thioredoxin (trxA) from Buchnera aphidicola subsp. Baizongia pistaciae (strain Bp).